The chain runs to 25 residues: Caerin-2.3 (25 aa).

Expressed by the skin parotoid and/or rostral glands.

The protein resides in the secreted. Acts as a male sex pheromone that attracts females. Has no antimicrobial activity. In Ranoidea caerulea (Green tree frog), this protein is Caerin-2.3.